Reading from the N-terminus, the 705-residue chain is MAKKPSAPNNTKPATIHDQKATRGNGGELHQIAEGDTPVLTTAQGGPVADDQNSLRAGERGPTLIEDFHFREKIFHFDHERIPERVVHARGYGVHGFFETYESLAAYTRADLFQRPGERTPAFVRFSTVAGSKGSFDLARDVRGFAVKIYTKEGNWDLVGNNIPVFFIQDAIKFPDVIHSVKPEPDREFPQAQSAHDNFWDFISLTPESMHMIMWVMSDRAIPRSFRFMEGFGVHTFRFVNAKDESTFVKFHWKPKLGLQSVVWNEAVKINGADPDFHRRDMWQAIQSGNFPEWDLHVQLFDQDFADKFDFDILDPTKIIPEEVLPTKPVGRLVLDRMPENFFAETEQVAFMTQNVPPGIDFSDDPLLQGRNFSYLDTQLKRLGSPNFTHLPINAPKCPFQHFQQDGHMAMRNPVGRVNYQPNSWGEGPRESPMKGFRHFPSEEQGPKLRIRAESFADHYSQARQFFISQTPPEQRHIADALTFELSKVETPVIRERMVAHLLNIDETLGKKVGHALGLETMPKPADAAVATRQDLDPSPALSIIQRGPKRFEGRKLGILATDGADGALLDALIAAVEKEKAAFELIAPKVGGFTASDGKRIAAHQMLDGGPSVLYDAVVLLPSAEAVTDLIDVATARDFVADAFAHCKYIGYAGAAVPLLERAGIAELLDEGTIELTDAASAAAFLTEIGKLRVWGREPSVKLK.

The interval 1–31 (MAKKPSAPNNTKPATIHDQKATRGNGGELHQ) is disordered. Active-site residues include histidine 88 and asparagine 161. Tyrosine 375 contributes to the heme binding site.

The protein belongs to the catalase family. HPII subfamily. Requires heme as cofactor.

It carries out the reaction 2 H2O2 = O2 + 2 H2O. Decomposes hydrogen peroxide into water and oxygen; serves to protect cells from the toxic effects of hydrogen peroxide. Could protect cells in nodules which have a high potential to produce hydrogen peroxide because of the strong reducing conditions required for nitrogen fixation and the action of several proteins. This is Catalase C (katE) from Rhizobium meliloti (strain 1021) (Ensifer meliloti).